We begin with the raw amino-acid sequence, 953 residues long: Protein ENHANCER OF LHP1 1 (953 aa).

WD repeat units lie at residues 15-55 (GGSA…TLPP), 60-99 (HHQD…FQTN), 102-143 (RFTL…RVLK), 144-183 (GHKG…VSFT), 192-232 (GFNT…KLFA), 236-275 (DHLE…DIDR), and 277-316 (KFEE…SMLS). 3 disordered regions span residues 347–370 (SESL…RKRL), 385–419 (EELN…GAFK), and 851–877 (ESKV…SATK). Positions 349-359 (SLDDAMGDSDD) are enriched in acidic residues. Residues 853 to 877 (KVQNPPASIQTSENTEAVMKSSATK) are compositionally biased toward polar residues. The Nuclear localization signal signature appears at 900-907 (TKKDKSDD). The disordered stretch occupies residues 919 to 953 (KNPVNNVNKEDKGQEKEVNQGEARRSSNPFLKSTV). The span at 926–943 (NKEDKGQEKEVNQGEARR) shows a compositional bias: basic and acidic residues. The span at 944 to 953 (SSNPFLKSTV) shows a compositional bias: polar residues.

Interacts with EZA1/SWN, LHP1, SLD5 and CLF in the nucleus. In terms of tissue distribution, expressed in root meristematic zones, initiating lateral roots, young leaves and the shoot apex.

It is found in the nucleus. Functionally, participates in maintaining the H3K27me3 mark at target genes by interacting with LHP1-PRC2 complexes during replication, thus contributing to H3K27me3 inheritance. This Arabidopsis thaliana (Mouse-ear cress) protein is Protein ENHANCER OF LHP1 1.